Consider the following 304-residue polypeptide: Plasmodesmata-located protein 3 (304 aa).

Positions 1 to 26 (MGFYSLKQLLLLYIIIMALFSDLKLA) are cleaved as a signal peptide. At 27–272 (KSSSPEYTNL…SSSSGTTGKT (246 aa)) the chain is on the extracellular side. Gnk2-homologous domains follow at residues 34 to 138 (TNLI…ISGF) and 143 to 242 (GMEL…FYPN). 6 cysteine pairs are disulfide-bonded: cysteine 41-cysteine 116, cysteine 92-cysteine 101, cysteine 104-cysteine 129, cysteine 151-cysteine 220, cysteine 196-cysteine 205, and cysteine 208-cysteine 233. Residues 273–293 (VAIIVGGTAGVGFLVICLLFV) traverse the membrane as a helical segment. Positions 273–293 (VAIIVGGTAGVGFLVICLLFV) are necessary and sufficient for plasmodesmal targeting. The Cytoplasmic segment spans residues 294 to 304 (KNLMKKKYDDY).

The protein belongs to the cysteine-rich repeat secretory protein family. Plasmodesmata-located proteins (PDLD) subfamily. (Microbial infection) Interacts with Grapevine fanleaf virus (GFLV) 2B-MP. Highly expressed in inflorescence pedacel and shoot apex. Expressed in the outermost L1 layer of the shoot apical meristem and in the epidermis of bulging floral primordia. Within the L1, expression was restricted to the peripheral zone (at protein level).

The protein localises to the cell membrane. Its subcellular location is the cell junction. The protein resides in the plasmodesma. Functionally, modulates cell-to-cell trafficking. This is Plasmodesmata-located protein 3 from Arabidopsis thaliana (Mouse-ear cress).